We begin with the raw amino-acid sequence, 329 residues long: Porphobilinogen deaminase (329 aa).

An S-(dipyrrolylmethanemethyl)cysteine modification is found at C250.

The protein belongs to the HMBS family. Monomer. Dipyrromethane is required as a cofactor.

It carries out the reaction 4 porphobilinogen + H2O = hydroxymethylbilane + 4 NH4(+). It participates in porphyrin-containing compound metabolism; protoporphyrin-IX biosynthesis; coproporphyrinogen-III from 5-aminolevulinate: step 2/4. Its function is as follows. Tetrapolymerization of the monopyrrole PBG into the hydroxymethylbilane pre-uroporphyrinogen in several discrete steps. This is Porphobilinogen deaminase from Burkholderia thailandensis (strain ATCC 700388 / DSM 13276 / CCUG 48851 / CIP 106301 / E264).